Here is an 87-residue protein sequence, read N- to C-terminus: Conotoxin QcMNCL-XIII0.1 (87 aa).

The signal sequence occupies residues 1-18 (MNCLQLLLVLLLISTIAA). A propeptide spanning residues 19 to 34 (LHGDGRVPQRRGRNIR) is cleaved from the precursor.

Post-translationally, contains 4 disulfide bonds. In terms of tissue distribution, expressed by the venom duct.

It localises to the secreted. May interact and inhibit Cav3.1/CACNA1G calcium channels. In a ex vivo model, shows ability to block nerve signal transduction. This Conus quercinus (Oak cone) protein is Conotoxin QcMNCL-XIII0.1.